Consider the following 172-residue polypeptide: Scytalone dehydratase-like protein Arp1 (172 aa).

Tyr-49 provides a ligand contact to substrate. Active-site residues include His-84 and His-109. A substrate-binding site is contributed by Asn-130.

Belongs to the scytalone dehydratase family. Homotrimer. Each subunit contains an active site, located in the central part of the hydrophobic core of the monomer, which functions independently.

Scytalone dehydratase-like protein; part of the Pks2 gene cluster that mediates the formation of infectious structures (appressoria), enabling these fungi to kill insects faster. The product of the Pks2 gene cluster is different from the one of Pks1 and has still not been identified. This Metarhizium robertsii (strain ARSEF 23 / ATCC MYA-3075) (Metarhizium anisopliae (strain ARSEF 23)) protein is Scytalone dehydratase-like protein Arp1.